A 113-amino-acid chain; its full sequence is Ig heavy chain V-III region E109 (113 aa).

One can recognise an Ig-like domain in the interval 1 to 113 (EVKLEESGGG…YWGQGTLVTV (113 aa)). A disulfide bridge connects residues Cys-22 and Cys-98.

The chain is Ig heavy chain V-III region E109 from Mus musculus (Mouse).